Consider the following 343-residue polypeptide: Nod factor export ATP-binding protein I (343 aa).

The span at 1–14 (MQLLTRANVSSSPS) shows a compositional bias: polar residues. The disordered stretch occupies residues 1-38 (MQLLTRANVSSSPSRRPESNALKQKCHGHSNADNSLSR). The 231-residue stretch at 45–275 (IELTNVSKSY…QIGCDVIEIY (231 aa)) folds into the ABC transporter domain. 77–84 (GPNGAGKS) contributes to the ATP binding site.

This sequence belongs to the ABC transporter superfamily. Lipooligosaccharide exporter (TC 3.A.1.102) family. In terms of assembly, the complex is composed of two ATP-binding proteins (NodI) and two transmembrane proteins (NodJ).

The protein resides in the cell inner membrane. Its function is as follows. Part of the ABC transporter complex NodIJ involved in the export of the nodulation factors (Nod factors), the bacterial signal molecules that induce symbiosis and subsequent nodulation induction. Nod factors are LCO (lipo-chitin oligosaccharide), a modified beta-1,4-linked N-acetylglucosamine oligosaccharide. This subunit is responsible for energy coupling to the transport system. The protein is Nod factor export ATP-binding protein I of Sinorhizobium fredii (strain NBRC 101917 / NGR234).